The primary structure comprises 161 residues: MPAPILPLIEAAGRWPERGALVGLDLGTKTIGVAVSDPDRRLATGVETIQRKAFKADAARLLAICAERKVVGFVLGLPINMDGSEGPRAQSTRAFARNLAGLTDLPIGLWDERLSTAAVERELIGMDVSRAKRAEVIDTHAAIFILQGALDRLTTLRRSGQ.

This sequence belongs to the YqgF nuclease family.

It is found in the cytoplasm. In terms of biological role, could be a nuclease involved in processing of the 5'-end of pre-16S rRNA. This is Putative pre-16S rRNA nuclease from Bradyrhizobium sp. (strain ORS 278).